The chain runs to 674 residues: MKTLKALKIFIIVYISSVSLESFAGFGESCSNLPITSDGYLETYTAYGYIIRSIDMKDPRGNCNPYTSSITFCFKNVEGSTSPCTIYTLNEGDARKISDLSTDNNPNLGANTVLKNIVLTVKKFGNDLCLAMPTSRGPMPVACKSLNATPAPTNPKYENCNIGKSCYTGANYSQSLINFSGLAVQCLSETLNKIFFTGNSCSSQDQNSRITHLAAFSTFQGYLKRIIGAALILYTMFFAFNMALNKEYATTEKITLFIIKFLFVVYFSIGLEPLNFSGGQTVKENGMLKYGLPLLTGAAPDFAEMIFNAAGSRGLCQFDNSKYKDGYKFYGLWDAIDCRIGYYLGLDLLYNIDKNGILGHSVGNGPGGNNKPIPNFDPDSKKDRPHDLSKAGALRFFTVMFGFLMSGHIIILVAGIAFSVIFLSILLYFITHYLVCMITIYVMTYISPIFIPMVLFTRTKAYFDGWVKVCISCALQPAVVAGFIALLITMYDSAIFKNCEFLRYDYEKGDIRFSTFELRLPSIDADKCQESFGYKMLKYYAGEGWEEHLLILFPIKSIVRDVVSILAELLCVLVFSVIFYYFSKSIGRFAADLTNGPNMDAVTASPTKIVDLVKKGAAFLQDASSVHAQGKSPVEDKPDIGSKRKDGVQQGEDSENSSGGELADLASGSGGGKL.

Residues Met-1–Ala-24 form the signal peptide. Helical transmembrane passes span Ile-226–Lys-246 and Ile-254–Leu-274. A disordered region spans residues Gly-363–Arg-384. 4 consecutive transmembrane segments (helical) span residues Ile-409–Phe-429, Cys-436–Phe-456, Val-469–Thr-489, and Val-562–Phe-582. Positions Ser-624–Leu-674 are disordered. The span at Pro-633–Gly-647 shows a compositional bias: basic and acidic residues.

This sequence belongs to the TrbL/VirB6 family.

It localises to the cell membrane. This is an uncharacterized protein from Rickettsia typhi (strain ATCC VR-144 / Wilmington).